Here is a 1330-residue protein sequence, read N- to C-terminus: ESX-3 secretion system protein EccC3 (1330 aa).

Helical transmembrane passes span 43-63 and 65-85; these read LPYLIGILIVGMIVALVATGM and VISPQTLFFPFVLLLAATALY. FtsK domains are found at residues 456–662, 811–1000, and 1090–1280; these read GEPL…SVSR, RDPL…RDSN, and LAPV…ADSG. ATP contacts are provided by residues 479 to 486, 829 to 836, and 1107 to 1114; these read GMTGSGKS, GGPKSGKS, and GDARSGKT.

Part of the ESX-3 / type VII secretion system (T7SS), which is composed of cytosolic and membrane components. The ESX-3 membrane complex is composed of EccB3, EccC3, EccD3 and EccE3.

The protein resides in the cell inner membrane. Its function is as follows. Part of the ESX-3 specialized secretion system, which is important for iron and zinc uptake or homeostasis. This chain is ESX-3 secretion system protein EccC3, found in Mycobacterium tuberculosis (strain ATCC 25618 / H37Rv).